Consider the following 534-residue polypeptide: MLKSSSSLVAKSILRHQCKSMSELYKIHTLLITLGLSEEEPFVSQTLSFSALSSSGDVDYAYKFLSKLSDPPNYGWNFVIRGFSNSRNPEKSISVYIQMLRFGLLPDHMTYPFLMKSSSRLSNRKLGGSLHCSVVKSGLEWDLFICNTLIHMYGSFRDQASARKLFDEMPHKNLVTWNSILDAYAKSGDVVSARLVFDEMSERDVVTWSSMIDGYVKRGEYNKALEIFDQMMRMGSSKANEVTMVSVICACAHLGALNRGKTVHRYILDVHLPLTVILQTSLIDMYAKCGSIGDAWSVFYRASVKETDALMWNAIIGGLASHGFIRESLQLFHKMRESKIDPDEITFLCLLAACSHGGLVKEAWHFFKSLKESGAEPKSEHYACMVDVLSRAGLVKDAHDFISEMPIKPTGSMLGALLNGCINHGNLELAETVGKKLIELQPHNDGRYVGLANVYAINKQFRAARSMREAMEKKGVKKIAGHSILDLDGTRHRFIAHDKTHFHSDKIYAVLQLTGAWMNLDVDYDDQDNHCFCS.

PPR repeat units follow at residues 41-71 (PFVS…LSDP), 72-106 (PNYG…GLLP), 107-141 (DHMT…GLEW), 142-172 (DLFI…MPHK), 173-203 (NLVT…MSER), 204-238 (DVVT…GSSK), 240-274 (NEVT…HLPL), 275-305 (TVIL…ASVK), 308-342 (DALM…KIDP), 343-377 (DEIT…GAEP), and 378-408 (KSEH…MPIK). Residues 413–488 (MLGALLNGCI…IAGHSILDLD (76 aa)) are type E motif. Residues 489–519 (GTRHRFIAHDKTHFHSDKIYAVLQLTGAWMN) are type E(+) motif.

The protein belongs to the PPR family. PCMP-E subfamily.

The protein is Pentatricopeptide repeat-containing protein At5g08305 (PCMP-E105) of Arabidopsis thaliana (Mouse-ear cress).